A 377-amino-acid chain; its full sequence is NADH dehydrogenase [ubiquinone] 1 alpha subcomplex subunit 9, mitochondrial (377 aa).

The transit peptide at 1-35 (MAAAAQSRVVRVLSMSRSAITAIATSVCHGPPCRQ) directs the protein to the mitochondrion. Position 175 is an N6-succinyllysine (K175). An N6-acetyllysine mark is found at K189 and K370.

The protein belongs to the complex I NDUFA9 subunit family. As to quaternary structure, complex I is composed of 45 different subunits. This a component of the hydrophobic protein fraction. Interacts with BLOC1S1. Interacts with SLC2A4. Interacts with CLOCK. Interacts with RAB5IF. Requires FAD as cofactor. In terms of processing, acetylated on lysine residues. BLOC1S1 is required for acetylation.

Its subcellular location is the mitochondrion matrix. Accessory subunit of the mitochondrial membrane respiratory chain NADH dehydrogenase (Complex I), that is believed not to be involved in catalysis. Complex I functions in the transfer of electrons from NADH to the respiratory chain. The immediate electron acceptor for the enzyme is believed to be ubiquinone. In Gorilla gorilla gorilla (Western lowland gorilla), this protein is NADH dehydrogenase [ubiquinone] 1 alpha subcomplex subunit 9, mitochondrial (NDUFA9).